We begin with the raw amino-acid sequence, 872 residues long: MREPNLYVILSHALIGCGFFFLYVQHVRVIFETRTNIQQLNQLEREALLRREDALYYAFYKQLAEGPDFWHGYEQLKNVTDIEYPHSVNVLQRFYVLPELVTAYFFHVVRSGFNPMVQPMQFYLEFVWLMGGVTLLVLYLYGTLLSENIFGGIYGVISYLMFHSFVAKIYERPLARENFAFPFIFLQMFYLCICIGRIIHRQRHTSRMFMIFAMSLFTACALLSWQFSTFIFTTQILIMMTSWNASALPTALVNAFVLDYSLSHLLGHALAFVMSHGNSQLLLTWQLSISLFLFLITMVRQLRHVRSRRLGHAQDLLNGDLFSLKFLMLTLLLASSVQTTLIELFNRAGVVSVTEGDQQHFFDICAHWALQVNVGFVAHLSACNPQYARVAWSELWQLVKTMIVKPYCMYGVVMLAMFFRRWRKSGAPVSALTEEQRERARKYVLEDFIEEHFVSMSDMSSKETEKQLYKCFRLLKSCDYDYERYKRAQASLRKEQPPARDDFMQDIKRLRAQINRNSVKQRKERAQETKEAATDGASTPTEEEDKDPEAESESKKKNQEPGSGETETESAADPTETPPSRSADNEEEEEEHSATAAGCGSNSSGHRQRKRSSSRRSSVVPTANAQILNMHYVYSFLQMLVFTLIGLAVRKLFFLSFTQGCVIAPTVCSKLWYHRQRNIFWSVSLAVFLLSMFDPGMVNIREEYFPTRYSKSGDDLDSMLEWIKLNTERDAVFAGPVDIIGTVHLTTKRPIVNHAHLEMRQIAERTEHVYSVYSRQQSSDIYNQCAQLKIQYLIISLDECTNEVRDDCDLLAIWDDKQPAYQKYPQFCHELLHKNVPSFLKVFANDHYGIIKMFSQSVQINLKHNKMPEMSI.

The next 9 membrane-spanning stretches (helical) occupy residues 4–24, 126–146, 149–169, 179–199, 211–231, 257–277, 279–299, 326–346, and 399–419; these read PNLY…FLYV, FVWL…TLLS, IFGG…VAKI, FAFP…GRII, IFAM…STFI, VLDY…MSHG, SQLL…ITMV, FLML…ELFN, and VKTM…AMFF. A coiled-coil region spans residues 508 to 535; sequence KRLRAQINRNSVKQRKERAQETKEAATD. The interval 514–620 is disordered; sequence INRNSVKQRK…RSSSRRSSVV (107 aa). A compositionally biased stretch (basic and acidic residues) spans 524–533; that stretch reads ERAQETKEAA. Over residues 541–551 the composition is skewed to acidic residues; it reads TEEEDKDPEAE. A run of 2 helical transmembrane segments spans residues 627-647 and 678-698; these read ILNM…LIGL and NIFW…PGMV.

Belongs to the dpy-19 family.

It localises to the membrane. Functionally, probable C-mannosyltransferase that mediates C-mannosylation of tryptophan residues on target proteins. The sequence is that of C-mannosyltransferase dpy-19 homolog from Drosophila melanogaster (Fruit fly).